A 259-amino-acid chain; its full sequence is Sphinganine C4-monooxygenase 2 (259 aa).

The next 3 membrane-spanning stretches (helical) occupy residues 10–30, 54–74, and 91–111; these read FLGTFVPILVYWVYSGMYICL, AVVKGVLLQQTLQAIISVILF, and ILLLARQFIIAMLVIDTWQYF. Residues 98–234 form the Fatty acid hydroxylase domain; the sequence is FIIAMLVIDT…FVMWDRILGT (137 aa). A Histidine box-1 motif is present at residues 113-117; that stretch reads HRYMH. The short motif at 127-131 is the Histidine box-2 element; sequence HSQHH. The short motif at 206 to 212 is the Histidine box-3 element; that stretch reads YHDVHHQ.

Belongs to the sterol desaturase family. Fe cation is required as a cofactor. Ubiquitous, with higher levels in flowers and roots.

The protein resides in the endoplasmic reticulum membrane. It carries out the reaction a dihydroceramide + 2 Fe(II)-[cytochrome b5] + O2 + 2 H(+) = a phytoceramide + 2 Fe(III)-[cytochrome b5] + H2O. Its pathway is membrane lipid metabolism; sphingolipid biosynthesis. In terms of biological role, involved in sphingolipid trihydroxy long-chain base (4-hydroxysphinganine) biosynthesis. Can use C18- and C20-sphinganine as substrates to produce C18- and C20-phytosphinganines (D-ribo-2-amino-1,3,4-trihydroxyoctadecane and -eicosane). The chain is Sphinganine C4-monooxygenase 2 (SBH2) from Arabidopsis thaliana (Mouse-ear cress).